Reading from the N-terminus, the 428-residue chain is MRTQTFPPSSSSSRTTHPKKNRHSSNSSSMALVTPAKSSTGAAPKQSSQSGWDYWTRVYSDDAQTTGTPRDVRISDMLSSESLIRAKLLFLNVPSLPSAHKNIILNLVKRELNHDISIQDVVVVPPAKWFLNFYRPEDALKVMKHLNGYSYRGHILAVRFCYPDGTYGDESALTELVQCTNSAKGRILEKKDIVQDTFAVECWTKTEFDSLKVFEKELTNLLKAHAYLPYHTVLQSMRNLFTCKVQSELSSMFISDALAQWPTGLIRIFNRNVKVVSNTMCLSSSSYYTQRIHDSALEGGCSVHRNSWEPTVPDDIRSEVQLIQYTNSFLGHFGPQNIDVDIPIRILAQSLRGTWPKTGPKLAALLTEISSGFVLINRVLYLSSNLHHHEKIIDNLACFQDDCTDVYFLPLSCTTEDQKGKTVDYEDI.

Residues 1–49 (MRTQTFPPSSSSSRTTHPKKNRHSSNSSSMALVTPAKSSTGAAPKQSSQ) form a disordered region. Over residues 24–49 (SSNSSSMALVTPAKSSTGAAPKQSSQ) the composition is skewed to polar residues.

This is an uncharacterized protein from Caenorhabditis elegans.